We begin with the raw amino-acid sequence, 353 residues long: Elongation factor Ts (353 aa).

Residues 80–83 (TDFV) form an involved in Mg(2+) ion dislocation from EF-Tu region.

The protein belongs to the EF-Ts family.

Its subcellular location is the cytoplasm. In terms of biological role, associates with the EF-Tu.GDP complex and induces the exchange of GDP to GTP. It remains bound to the aminoacyl-tRNA.EF-Tu.GTP complex up to the GTP hydrolysis stage on the ribosome. In Sulfurovum sp. (strain NBC37-1), this protein is Elongation factor Ts.